The primary structure comprises 152 residues: Biotin carboxyl carrier protein of acetyl-CoA carboxylase (152 aa).

In terms of domain architecture, Biotinyl-binding spans isoleucine 72–isoleucine 148. Position 114 is an N6-biotinyllysine (lysine 114).

It localises to the plastid. The protein resides in the chloroplast. It participates in lipid metabolism; fatty acid biosynthesis. In terms of biological role, this protein is a component of the acetyl coenzyme A carboxylase complex; first, biotin carboxylase catalyzes the carboxylation of the carrier protein and then the transcarboxylase transfers the carboxyl group to form malonyl-CoA. In Cyanidium caldarium (Red alga), this protein is Biotin carboxyl carrier protein of acetyl-CoA carboxylase (accB).